Reading from the N-terminus, the 437-residue chain is Putative galacturan 1,4-alpha-galacturonidase A (437 aa).

Residues 1-20 (MKLSGSSALLLLGFGLLGHA) form the signal peptide. N-linked (GlcNAc...) asparagine glycosylation is found at Asn30, Asn101, Asn110, Asn161, Asn196, and Asn203. A PbH1 1 repeat occupies 222–243 (SDHVTITNWVYEGGDDAVAFKP). Asp236 serves as the catalytic Proton donor. N-linked (GlcNAc...) asparagine glycosylation is found at Asn244, Asn252, Asn278, Asn324, Asn352, Asn371, Asn382, and Asn387. PbH1 repeat units lie at residues 245–265 (STNI…AFGS), 276–302 (VENI…YFKS), and 322–343 (VRNV…YIDT). Cys396 and Cys402 are disulfide-bonded.

Belongs to the glycosyl hydrolase 28 family.

It localises to the secreted. It carries out the reaction [(1-&gt;4)-alpha-D-galacturonosyl](n) + H2O = alpha-D-galacturonate + [(1-&gt;4)-alpha-D-galacturonosyl](n-1). Specific in hydrolyzing the terminal glycosidic bond of polygalacturonic acid and oligogalacturonates. The polypeptide is Putative galacturan 1,4-alpha-galacturonidase A (rgxA) (Aspergillus flavus (strain ATCC 200026 / FGSC A1120 / IAM 13836 / NRRL 3357 / JCM 12722 / SRRC 167)).